A 429-amino-acid polypeptide reads, in one-letter code: 3-phosphoshikimate 1-carboxyvinyltransferase (429 aa).

Residues Lys-22, Ser-23, and Arg-27 each coordinate 3-phosphoshikimate. Phosphoenolpyruvate is bound at residue Lys-22. The phosphoenolpyruvate site is built by Gly-94 and Arg-122. The 3-phosphoshikimate site is built by Ser-167, Gln-169, Asp-315, and Lys-342. Gln-169 serves as a coordination point for phosphoenolpyruvate. Asp-315 (proton acceptor) is an active-site residue. Phosphoenolpyruvate is bound by residues Arg-346 and Arg-388.

It belongs to the EPSP synthase family. As to quaternary structure, monomer.

The protein localises to the cytoplasm. The enzyme catalyses 3-phosphoshikimate + phosphoenolpyruvate = 5-O-(1-carboxyvinyl)-3-phosphoshikimate + phosphate. It functions in the pathway metabolic intermediate biosynthesis; chorismate biosynthesis; chorismate from D-erythrose 4-phosphate and phosphoenolpyruvate: step 6/7. Functionally, catalyzes the transfer of the enolpyruvyl moiety of phosphoenolpyruvate (PEP) to the 5-hydroxyl of shikimate-3-phosphate (S3P) to produce enolpyruvyl shikimate-3-phosphate and inorganic phosphate. The polypeptide is 3-phosphoshikimate 1-carboxyvinyltransferase (Geobacter sulfurreducens (strain ATCC 51573 / DSM 12127 / PCA)).